The chain runs to 436 residues: Phosphoribosylamine--glycine ligase (436 aa).

One can recognise an ATP-grasp domain in the interval 106–318 (RKLFEDYRIP…MLEICEGIVD (213 aa)). 133–196 (MEDFDSEAVV…EERVVGEEFT (64 aa)) contributes to the ATP binding site. 3 residues coordinate Mg(2+): glutamine 276, glutamate 288, and asparagine 290. Residues glutamine 276, glutamate 288, and asparagine 290 each contribute to the Mn(2+) site.

The protein belongs to the GARS family. Requires Mg(2+) as cofactor. Mn(2+) is required as a cofactor.

It catalyses the reaction 5-phospho-beta-D-ribosylamine + glycine + ATP = N(1)-(5-phospho-beta-D-ribosyl)glycinamide + ADP + phosphate + H(+). Its pathway is purine metabolism; IMP biosynthesis via de novo pathway; N(1)-(5-phospho-D-ribosyl)glycinamide from 5-phospho-alpha-D-ribose 1-diphosphate: step 2/2. The sequence is that of Phosphoribosylamine--glycine ligase from Methanothermobacter thermautotrophicus (strain ATCC 29096 / DSM 1053 / JCM 10044 / NBRC 100330 / Delta H) (Methanobacterium thermoautotrophicum).